Reading from the N-terminus, the 177-residue chain is MKQILNILPMFIFFIFYKFYDIFIASGSLIVISGLICIIHWILYNEIDKISLFSFLSVFFFGSLTIFFHNSQFIKWKITIIYIIFSLVLLISQFFTRKPMIQRFLEKDIKISNIYWRKINFIWSLFFLFCAILNIYIAYYFSETIWVNFKVFGFTSLTFFLILITSIYINCKISKNK.

5 helical membrane-spanning segments follow: residues 22-42 (IFIA…IHWI), 50-70 (ISLF…FFHN), 76-96 (WKIT…QFFT), 121-141 (FIWS…AYYF), and 149-169 (FKVF…SIYI).

This sequence belongs to the YciB family.

Its subcellular location is the cell inner membrane. Plays a role in cell envelope biogenesis, maintenance of cell envelope integrity and membrane homeostasis. The polypeptide is Inner membrane-spanning protein YciB (Buchnera aphidicola subsp. Acyrthosiphon pisum (strain 5A)).